The primary structure comprises 495 residues: Lysine--tRNA ligase (495 aa).

Glu406 and Glu413 together coordinate Mg(2+).

Belongs to the class-II aminoacyl-tRNA synthetase family. As to quaternary structure, homodimer. Requires Mg(2+) as cofactor.

The protein resides in the cytoplasm. It catalyses the reaction tRNA(Lys) + L-lysine + ATP = L-lysyl-tRNA(Lys) + AMP + diphosphate. This is Lysine--tRNA ligase from Staphylococcus aureus (strain MW2).